The sequence spans 303 residues: Hemolysin E (303 aa).

Residues C87 and C285 are joined by a disulfide bond. A helical membrane pass occupies residues 179-199 (AGAAAGIVAGPFGLIISYSIA).

This sequence belongs to the hemolysin E family. Monomer and oligomer. In periplasm, it is present as a monomer, while in outer membrane vesicles, it oligomerizes to form a pore structure that is active. The pore is formed by a dodecamer. In periplasm, it forms a disulfide bond, which prevents the oligomerization. In outer membrane vesicles, the redox status prevents formation of the disulfide bond, leading to oligomerization and pore formation.

It is found in the secreted. The protein localises to the periplasm. It localises to the host cell membrane. Its function is as follows. Toxin, which has some hemolytic activity towards mammalian cells. Acts by forming a pore-like structure upon contact with mammalian cells. This chain is Hemolysin E (hlyE), found in Salmonella paratyphi A (strain ATCC 9150 / SARB42).